The following is a 293-amino-acid chain: Pyridoxal 5'-phosphate synthase subunit PdxS (293 aa).

Residue Asp-25 coordinates D-ribose 5-phosphate. Lys-82 serves as the catalytic Schiff-base intermediate with D-ribose 5-phosphate. Asp-103 provides a ligand contact to D-ribulose 5-phosphate. Position 154 (Gly-154) interacts with D-ribose 5-phosphate. Arg-166 lines the D-glyceraldehyde 3-phosphate pocket. D-ribose 5-phosphate-binding positions include Gly-215 and 236-237 (GS).

The protein belongs to the PdxS/SNZ family. As to quaternary structure, homohexamer and homododecamer. In the presence of PdxT, forms a dodecamer of heterodimers.

It carries out the reaction aldehydo-D-ribose 5-phosphate + D-glyceraldehyde 3-phosphate + L-glutamine = pyridoxal 5'-phosphate + L-glutamate + phosphate + 3 H2O + H(+). It participates in cofactor biosynthesis; pyridoxal 5'-phosphate biosynthesis. Functionally, catalyzes the formation of pyridoxal 5'-phosphate from ribose 5-phosphate (RBP), glyceraldehyde 3-phosphate (G3P) and ammonia. The ammonia is provided by the PdxT subunit. Can also use ribulose 5-phosphate and dihydroxyacetone phosphate as substrates, resulting from enzyme-catalyzed isomerization of RBP and G3P, respectively. The sequence is that of Pyridoxal 5'-phosphate synthase subunit PdxS from Thermotoga maritima (strain ATCC 43589 / DSM 3109 / JCM 10099 / NBRC 100826 / MSB8).